A 149-amino-acid chain; its full sequence is Transcriptional repressor NrdR (149 aa).

A zinc finger lies at 3 to 34 (CPFCSHSETQVVETRISEDGDSIRRRRQCASC). The region spanning 49–139 (PAIVKKDGRR…VYRSFEDIDE (91 aa)) is the ATP-cone domain.

Belongs to the NrdR family. It depends on Zn(2+) as a cofactor.

Functionally, negatively regulates transcription of bacterial ribonucleotide reductase nrd genes and operons by binding to NrdR-boxes. The protein is Transcriptional repressor NrdR of Albidiferax ferrireducens (strain ATCC BAA-621 / DSM 15236 / T118) (Rhodoferax ferrireducens).